We begin with the raw amino-acid sequence, 502 residues long: NAD(P)H-quinone oxidoreductase chain 4, chloroplastic (502 aa).

The next 14 membrane-spanning stretches (helical) occupy residues 4-24 (FPWL…IFFF), 37-57 (ICIC…HFQL), 87-107 (VGPI…AWPV), 113-130 (LFHF…GLFS), 134-154 (LLLF…LLSM), 167-187 (FILY…GMGL), 208-228 (ALEI…LPII), 242-262 (HYST…YGLV), 272-292 (AHSI…IYAA), 305-325 (IAYS…SITD), 330-350 (GAIL…FLAG), 374-396 (IFTM…GFAA), 416-436 (ILIT…SLSM), and 464-484 (LFVS…PDFV).

This sequence belongs to the complex I subunit 4 family.

Its subcellular location is the plastid. It is found in the chloroplast thylakoid membrane. It catalyses the reaction a plastoquinone + NADH + (n+1) H(+)(in) = a plastoquinol + NAD(+) + n H(+)(out). The enzyme catalyses a plastoquinone + NADPH + (n+1) H(+)(in) = a plastoquinol + NADP(+) + n H(+)(out). In Ranunculus macranthus (Large buttercup), this protein is NAD(P)H-quinone oxidoreductase chain 4, chloroplastic.